The following is a 1242-amino-acid chain: ATP-dependent helicase/nuclease subunit A (1242 aa).

Residues 12-487 (SRWTDEQWKA…IDLASNFRSR (476 aa)) enclose the UvrD-like helicase ATP-binding domain. 33–40 (AAAGSGKT) is a binding site for ATP. The 295-residue stretch at 514-808 (AAQLKYGADY…RIMTIHSSKG (295 aa)) folds into the UvrD-like helicase C-terminal domain.

Belongs to the helicase family. AddA subfamily. Heterodimer of AddA and AddB/RexB. It depends on Mg(2+) as a cofactor.

It carries out the reaction Couples ATP hydrolysis with the unwinding of duplex DNA by translocating in the 3'-5' direction.. It catalyses the reaction ATP + H2O = ADP + phosphate + H(+). Functionally, the heterodimer acts as both an ATP-dependent DNA helicase and an ATP-dependent, dual-direction single-stranded exonuclease. Recognizes the chi site generating a DNA molecule suitable for the initiation of homologous recombination. The AddA nuclease domain is required for chi fragment generation; this subunit has the helicase and 3' -&gt; 5' nuclease activities. The sequence is that of ATP-dependent helicase/nuclease subunit A from Geobacillus kaustophilus (strain HTA426).